Reading from the N-terminus, the 327-residue chain is GMP reductase (327 aa).

The Thioimidate intermediate role is filled by cysteine 175. 204 to 227 (IIADGGIRTNGDVAKSIRFGATMV) is a binding site for NADP(+).

It belongs to the IMPDH/GMPR family. GuaC type 2 subfamily.

It carries out the reaction IMP + NH4(+) + NADP(+) = GMP + NADPH + 2 H(+). Catalyzes the irreversible NADPH-dependent deamination of GMP to IMP. It functions in the conversion of nucleobase, nucleoside and nucleotide derivatives of G to A nucleotides, and in maintaining the intracellular balance of A and G nucleotides. This chain is GMP reductase, found in Bacillus anthracis.